Consider the following 123-residue polypeptide: Large ribosomal subunit protein uL18 (123 aa).

Belongs to the universal ribosomal protein uL18 family. As to quaternary structure, part of the 50S ribosomal subunit; part of the 5S rRNA/L5/L18/L25 subcomplex. Contacts the 5S and 23S rRNAs.

In terms of biological role, this is one of the proteins that bind and probably mediate the attachment of the 5S RNA into the large ribosomal subunit, where it forms part of the central protuberance. The sequence is that of Large ribosomal subunit protein uL18 from Wolbachia pipientis subsp. Culex pipiens (strain wPip).